The sequence spans 73 residues: Adipokinetic prohormone type 2 (73 aa).

The N-terminal stretch at 1 to 20 (MCRIFIVLLVVAALAIIIEG) is a signal peptide. Glutamine 21 carries the post-translational modification Pyrrolidone carboxylic acid. Position 30 is an asparagine amide (asparagine 30). The propeptide occupies 34-73 (SISSEQINDDCNPEEAIFQIYKLIVSEGERIRACQRDGKM).

In terms of tissue distribution, expressed in corpora cardiaca (CC), corpora allata (CA) and gnathal ganglion (GNG) (at protein level). Expression in CC and CA detected in all animals, expression in GNG detected in few animals (at protein level). Not expressed in antennal lobe (AL) (at protein level).

It localises to the secreted. Its function is as follows. This hormone, released from cells in the corpora cardiaca, causes release of diglycerides from the fat body and stimulation of muscles to use these diglycerides as an energy source during energy-demanding processes. The polypeptide is Adipokinetic prohormone type 2 (Agrotis ipsilon (Black cutworm moth)).